Reading from the N-terminus, the 1218-residue chain is Coatomer subunit alpha-2 (1218 aa).

WD repeat units lie at residues 7-48, 49-88, 91-132, 133-172, 202-241, 246-285, 288-326, and 363-404; these read TKSN…DRFD, EHDGPVRGVHFHATQPLFVSGGDDYKIKVWNYKTHRCLFT, GHLD…AVLT, GHNHYVMCASFHPKEDLVVSASLDQTVRVWDISALRKKSV, GHDRGVNWASFHPTLPLIVSGADDRQVKIWRMNDTKAWEV, GHMNNVSCVMFHAKQDIIVSNSEDKSIRIWDATKRTGIQT, REHDRFWILSAHPEMNLLAAGHDSGMIVFKLERERPAFS, and SLNQ…AGRA. The disordered stretch occupies residues 855 to 876; it reads MANGGDGFDAEEGEANEEDGEE. Residues 862–876 are compositionally biased toward acidic residues; that stretch reads FDAEEGEANEEDGEE.

Oligomeric complex that consists of at least the alpha, beta, beta', gamma, delta, epsilon and zeta subunits.

It localises to the cytoplasm. The protein localises to the golgi apparatus membrane. It is found in the cytoplasmic vesicle. Its subcellular location is the COPI-coated vesicle membrane. The coatomer is a cytosolic protein complex that binds to dilysine motifs and reversibly associates with Golgi non-clathrin-coated vesicles, which further mediate biosynthetic protein transport from the ER, via the Golgi up to the trans Golgi network. Coatomer complex is required for budding from Golgi membranes, and is essential for the retrograde Golgi-to-ER transport of dilysine-tagged proteins. This chain is Coatomer subunit alpha-2, found in Oryza sativa subsp. japonica (Rice).